Here is a 272-residue protein sequence, read N- to C-terminus: MTEVRRRGRPGQAEPTAQKGAQALERGIAILQYLERSGGSSSVSDISGSLDLPLSTTFRLLKVLQAADFVYQDSQLGWWHIGLGVFNVGSAYIHNRDVLSVAGPFMHRLMLLSGETVNVAIRNGNEAVLIGQKECKSMVRMCAPLGSRLPLHASGAGKALLYPLTEEELVGIVVNTGLRRFTPTTLVDLPILLKNLEQAREQGYTVDQEEHVVGLNCIASAIYDDAGSVVAAISISGPASRLTEDRFISQGELVRDTAKDISTALGLKPPVA.

Residues 1 to 20 are disordered; it reads MTEVRRRGRPGQAEPTAQKG. The region spanning 21-83 is the HTH iclR-type domain; that stretch reads AQALERGIAI…SQLGWWHIGL (63 aa). Residues 43–62 constitute a DNA-binding region (H-T-H motif); sequence VSDISGSLDLPLSTTFRLLK. The 170-residue stretch at 98-267 folds into the IclR-ED domain; that stretch reads VLSVAGPFMH…AKDISTALGL (170 aa). Glyoxylate contacts are provided by residues 154–156, Asp207, Cys217, and 234–236; these read SGA and SIS.

Its function is as follows. Negative regulator of allantoin and glyoxylate utilization operons. Binds to the gcl promoter and to the allS-allA intergenic region. The sequence is that of HTH-type transcriptional repressor AllR (allR) from Salmonella paratyphi A (strain ATCC 9150 / SARB42).